Reading from the N-terminus, the 326-residue chain is Phospho-N-acetylmuramoyl-pentapeptide-transferase (326 aa).

The next 10 helical transmembrane spans lie at 2-22, 51-71, 73-93, 113-133, 143-163, 175-195, 199-219, 225-245, 250-270, and 305-325; these read ILAT…FPYF, VPPM…LLWV, LTPE…LGFI, ILIQ…YSAE, GVII…IVGS, GLAA…AYIT, MNIT…LWFN, IFMG…TSVL, MLFA…IIQI, and VIVM…ITFL.

It belongs to the glycosyltransferase 4 family. MraY subfamily. Requires Mg(2+) as cofactor.

It localises to the cell membrane. It catalyses the reaction UDP-N-acetyl-alpha-D-muramoyl-L-alanyl-gamma-D-glutamyl-meso-2,6-diaminopimeloyl-D-alanyl-D-alanine + di-trans,octa-cis-undecaprenyl phosphate = di-trans,octa-cis-undecaprenyl diphospho-N-acetyl-alpha-D-muramoyl-L-alanyl-D-glutamyl-meso-2,6-diaminopimeloyl-D-alanyl-D-alanine + UMP. It participates in cell wall biogenesis; peptidoglycan biosynthesis. Its function is as follows. Catalyzes the initial step of the lipid cycle reactions in the biosynthesis of the cell wall peptidoglycan: transfers peptidoglycan precursor phospho-MurNAc-pentapeptide from UDP-MurNAc-pentapeptide onto the lipid carrier undecaprenyl phosphate, yielding undecaprenyl-pyrophosphoryl-MurNAc-pentapeptide, known as lipid I. The polypeptide is Phospho-N-acetylmuramoyl-pentapeptide-transferase (Wolbachia sp. subsp. Drosophila simulans (strain wRi)).